Reading from the N-terminus, the 413-residue chain is MMRTFEQLTASQQKEVERQLQLYMTGAHEVIPPEELKAKLVKSISTGTPLKIKLGLDPSAPDVHLGHTVVLNKLRQFQENGHIVQLLIGDFTGKIGDPTGKSAARKQLTDEEVQHNAKTYFEQFGKVLDPEKVELHYNSKWLKTLNLEDVIELAGKITVARLMERDDFEERIAMQKPISLHEFFYPLMQGYDSVVLESDIELGGTDQHFNVLMGRHFQERYNKEKQVVILMPLLEGLDGVEKMSKSKHNYIGINEHPNDMYGKTMSLPDSLMKKYIHLATDLELEEKKQLVKDLETGAVHPRDAKMLLARTIVRMYHGEKAAEAAEHSFKTVFQENSLPEDIPAVNWKGEKTIAMIDLLVKLKLLSSKSEARRMIQNGGVRIDGEKVTDVHAKAEIRENMIIQVGKRKFLKLQ.

Residues Pro-58 to His-67 carry the 'HIGH' region motif. Tandem repeats lie at residues Gly-89–Lys-94 and Gly-96–Lys-101. The 2 X 6 AA tandem repeats stretch occupies residues Gly-89 to Lys-101. Residues Lys-242 to Ser-246 carry the 'KMSKS' region motif. Position 245 (Lys-245) interacts with ATP. The 61-residue stretch at Ile-353–Gln-413 folds into the S4 RNA-binding domain.

It belongs to the class-I aminoacyl-tRNA synthetase family. TyrS type 2 subfamily. In terms of assembly, homodimer.

Its subcellular location is the cytoplasm. The enzyme catalyses tRNA(Tyr) + L-tyrosine + ATP = L-tyrosyl-tRNA(Tyr) + AMP + diphosphate + H(+). Catalyzes the attachment of tyrosine to tRNA(Tyr) in a two-step reaction: tyrosine is first activated by ATP to form Tyr-AMP and then transferred to the acceptor end of tRNA(Tyr). The chain is Tyrosine--tRNA ligase 2 from Bacillus subtilis (strain 168).